The sequence spans 108 residues: MDQFECINVEEAHQKLHQGTAVLVDIRDPQSYAMGHTPQAFHLTNDTLGAFMRDHDFDTVVMVMCYHGNSSKGAAQYLLQQGYDAVYSIDGGFDAWHRHFPSEVAFGA.

Residues H17 to A105 form the Rhodanese domain. Catalysis depends on C65, which acts as the Cysteine persulfide intermediate.

Belongs to the GlpE family.

The protein resides in the cytoplasm. The catalysed reaction is thiosulfate + hydrogen cyanide = thiocyanate + sulfite + 2 H(+). The enzyme catalyses thiosulfate + [thioredoxin]-dithiol = [thioredoxin]-disulfide + hydrogen sulfide + sulfite + 2 H(+). In terms of biological role, transferase that catalyzes the transfer of sulfur from thiosulfate to thiophilic acceptors such as cyanide or dithiols. May function in a CysM-independent thiosulfate assimilation pathway by catalyzing the conversion of thiosulfate to sulfite, which can then be used for L-cysteine biosynthesis. The polypeptide is Thiosulfate sulfurtransferase GlpE (Citrobacter koseri (strain ATCC BAA-895 / CDC 4225-83 / SGSC4696)).